The following is a 331-amino-acid chain: Holliday junction branch migration complex subunit RuvB (331 aa).

A large ATPase domain (RuvB-L) region spans residues 1 to 186; that stretch reads MAKTMMQDRL…FGIVQRLEFY (186 aa). ATP is bound by residues Ile25, Arg26, Gly67, Lys70, Thr71, Thr72, 133-135, Arg176, Tyr186, and Arg223; that span reads EDF. Thr71 serves as a coordination point for Mg(2+). The small ATPAse domain (RuvB-S) stretch occupies residues 187 to 257; the sequence is NIADLTTIVS…IAGSALDMLA (71 aa). The tract at residues 260-331 is head domain (RuvB-H); the sequence is RRGLDHLDRR…LTQMAIDQMV (72 aa). The DNA site is built by Arg296, Arg315, and Arg320.

It belongs to the RuvB family. Homohexamer. Forms an RuvA(8)-RuvB(12)-Holliday junction (HJ) complex. HJ DNA is sandwiched between 2 RuvA tetramers; dsDNA enters through RuvA and exits via RuvB. An RuvB hexamer assembles on each DNA strand where it exits the tetramer. Each RuvB hexamer is contacted by two RuvA subunits (via domain III) on 2 adjacent RuvB subunits; this complex drives branch migration. In the full resolvosome a probable DNA-RuvA(4)-RuvB(12)-RuvC(2) complex forms which resolves the HJ.

The protein resides in the cytoplasm. The catalysed reaction is ATP + H2O = ADP + phosphate + H(+). Functionally, the RuvA-RuvB-RuvC complex processes Holliday junction (HJ) DNA during genetic recombination and DNA repair, while the RuvA-RuvB complex plays an important role in the rescue of blocked DNA replication forks via replication fork reversal (RFR). RuvA specifically binds to HJ cruciform DNA, conferring on it an open structure. The RuvB hexamer acts as an ATP-dependent pump, pulling dsDNA into and through the RuvAB complex. RuvB forms 2 homohexamers on either side of HJ DNA bound by 1 or 2 RuvA tetramers; 4 subunits per hexamer contact DNA at a time. Coordinated motions by a converter formed by DNA-disengaged RuvB subunits stimulates ATP hydrolysis and nucleotide exchange. Immobilization of the converter enables RuvB to convert the ATP-contained energy into a lever motion, pulling 2 nucleotides of DNA out of the RuvA tetramer per ATP hydrolyzed, thus driving DNA branch migration. The RuvB motors rotate together with the DNA substrate, which together with the progressing nucleotide cycle form the mechanistic basis for DNA recombination by continuous HJ branch migration. Branch migration allows RuvC to scan DNA until it finds its consensus sequence, where it cleaves and resolves cruciform DNA. The sequence is that of Holliday junction branch migration complex subunit RuvB from Psychrobacter arcticus (strain DSM 17307 / VKM B-2377 / 273-4).